A 345-amino-acid polypeptide reads, in one-letter code: MSSQQSKVVGLIFGGASGEHDVSIRSAATVAEGLSSGANKERYRVQHVYIDRQGRWWGDATARQVLSSGQALADDGSRPGFSGFPDGCLEVEIWYPVLHGPNGEDGTIQGLFSLMQRPFVGSGVLGSAVGMDKLAMKAAFSAAGLPQGPYRPVLASELVSNSQLLEELETQLGYPCFIKPANLGSSVGISKATNRSELQAGLDLAASHDSRLLVEKGLQVRELECAVLGGQHLKASVLGEVSFDADWYDYETKYSSGLSSTQIPADLPEAISSRAQHLAIEAVQAVGASGLSRVDFFYEEASGNLLINEINTLPGFTSQSMYPMLWKASGVPLEELVHQLLELAQ.

The 206-residue stretch at 137–342 (KAAFSAAGLP…LEELVHQLLE (206 aa)) folds into the ATP-grasp domain. 169-224 (ETQLGYPCFIKPANLGSSVGISKATNRSELQAGLDLAASHDSRLLVEKGLQVRELE) lines the ATP pocket. The Mg(2+) site is built by Asp295, Glu309, and Asn311.

The protein belongs to the D-alanine--D-alanine ligase family. Requires Mg(2+) as cofactor. The cofactor is Mn(2+).

The protein localises to the cytoplasm. The enzyme catalyses 2 D-alanine + ATP = D-alanyl-D-alanine + ADP + phosphate + H(+). The protein operates within cell wall biogenesis; peptidoglycan biosynthesis. Its function is as follows. Cell wall formation. This chain is D-alanine--D-alanine ligase, found in Synechococcus sp. (strain RCC307).